A 91-amino-acid chain; its full sequence is UPF0250 protein NMC1112 (91 aa).

This sequence belongs to the UPF0250 family.

In Neisseria meningitidis serogroup C / serotype 2a (strain ATCC 700532 / DSM 15464 / FAM18), this protein is UPF0250 protein NMC1112.